The primary structure comprises 328 residues: Sphingolipid delta(4)-desaturase DES1-like (328 aa).

3 consecutive transmembrane segments (helical) span residues 50–70 (PLAF…ATLL), 78–98 (ILTV…LAIH), and 114–134 (WLGI…FQKY). Positions 98–102 (HELSH) match the Histidine box-1 motif. The short motif at 135–139 (HLEHH) is the Histidine box-2 element. Helical transmembrane passes span 164–184 (LSKS…PLFL), 192–212 (WEFT…YFFG), and 217–237 (AYLI…GHFI). The Histidine box-3 signature appears at 266–270 (HNEHH).

Belongs to the fatty acid desaturase type 1 family. DEGS subfamily.

The protein resides in the endoplasmic reticulum membrane. It catalyses the reaction an N-acylsphinganine + 2 Fe(II)-[cytochrome b5] + O2 + 2 H(+) = an N-acylsphing-4-enine + 2 Fe(III)-[cytochrome b5] + 2 H2O. Its function is as follows. Sphingolipid-delta-4-desaturase required for the biosynthesis of delta-4-unsaturated sphingolipids and derivatives. The polypeptide is Sphingolipid delta(4)-desaturase DES1-like (Oryza sativa subsp. japonica (Rice)).